Reading from the N-terminus, the 453-residue chain is UDP-N-acetylmuramate--L-alanine ligase (453 aa).

Residue 112-118 participates in ATP binding; it reads GTHGKTT.

It belongs to the MurCDEF family.

The protein resides in the cytoplasm. It carries out the reaction UDP-N-acetyl-alpha-D-muramate + L-alanine + ATP = UDP-N-acetyl-alpha-D-muramoyl-L-alanine + ADP + phosphate + H(+). It functions in the pathway cell wall biogenesis; peptidoglycan biosynthesis. Cell wall formation. In Lawsonia intracellularis (strain PHE/MN1-00), this protein is UDP-N-acetylmuramate--L-alanine ligase.